The primary structure comprises 471 residues: Glutamate--tRNA ligase (471 aa).

Residues 9–19 (PSPTGYLHVGG) carry the 'HIGH' region motif. Positions 98, 100, 125, and 127 each coordinate Zn(2+). The 'KMSKS' region motif lies at 237-241 (KLSKR). Lys-240 contributes to the ATP binding site.

The protein belongs to the class-I aminoacyl-tRNA synthetase family. Glutamate--tRNA ligase type 1 subfamily. As to quaternary structure, monomer. The cofactor is Zn(2+).

The protein localises to the cytoplasm. It carries out the reaction tRNA(Glu) + L-glutamate + ATP = L-glutamyl-tRNA(Glu) + AMP + diphosphate. Catalyzes the attachment of glutamate to tRNA(Glu) in a two-step reaction: glutamate is first activated by ATP to form Glu-AMP and then transferred to the acceptor end of tRNA(Glu). This is Glutamate--tRNA ligase from Escherichia coli O157:H7.